We begin with the raw amino-acid sequence, 208 residues long: Uracil phosphoribosyltransferase (208 aa).

Residues arginine 78, arginine 103, and 130-138 (DPMLATGGS) each bind 5-phospho-alpha-D-ribose 1-diphosphate. Residues isoleucine 193 and 198–200 (GDA) contribute to the uracil site. A 5-phospho-alpha-D-ribose 1-diphosphate-binding site is contributed by aspartate 199.

The protein belongs to the UPRTase family. Mg(2+) is required as a cofactor.

It carries out the reaction UMP + diphosphate = 5-phospho-alpha-D-ribose 1-diphosphate + uracil. Its pathway is pyrimidine metabolism; UMP biosynthesis via salvage pathway; UMP from uracil: step 1/1. With respect to regulation, allosterically activated by GTP. Catalyzes the conversion of uracil and 5-phospho-alpha-D-ribose 1-diphosphate (PRPP) to UMP and diphosphate. In Photobacterium profundum (strain SS9), this protein is Uracil phosphoribosyltransferase.